The primary structure comprises 908 residues: 26S proteasome non-ATPase regulatory subunit 2 (908 aa).

M1 is subject to N-acetylmethionine. A disordered region spans residues 1–51 (MEEGGRDKTPVQSQQPSATTPSGADEKSSGKERRDAGEKDKEQELSEEDKQ). Residues T9 and T20 each carry the phosphothreonine modification. Over residues 10–22 (PVQSQQPSATTPS) the composition is skewed to polar residues. Over residues 24–51 (ADEKSSGKERRDAGEKDKEQELSEEDKQ) the composition is skewed to basic and acidic residues. A phosphoserine mark is found at S29 and S147. Position 194 is a phosphotyrosine (Y194). Phosphoserine is present on residues S361 and S363. PC repeat units follow at residues 409–442 (SAAA…YIKS), 443–479 (GALL…TMRL), 480–514 (GSIF…SMEV), 517–551 (VTAL…TELK), and 560–589 (LGLG…PFRS). Residue K551 is modified to N6-acetyllysine. Residues 623–643 (KEKEEDKDKKEKKDKDKKEAP) are compositionally biased toward basic and acidic residues. Positions 623–645 (KEKEEDKDKKEKKDKDKKEAPAD) are disordered. 2 PC repeats span residues 692–723 (LALA…EVSY) and 742–757 (AAML…KDPN). The segment at 708–903 (DTLSKFSHDA…LEGFVILRKN (196 aa)) is required for interaction with UBLCP1.

The protein belongs to the proteasome subunit S2 family. In terms of assembly, component of the 19S proteasome regulatory particle complex. The 26S proteasome consists of a 20S core particle (CP) and two 19S regulatory subunits (RP). The regulatory particle is made of a lid composed of 9 subunits, a base containing 6 ATPases and few additional components including PSMD2. Interacts with RPGRIP1L. Interacts with CRY1 in a KDM8-dependent manner. Interacts (via C-terminus) with phosphatase UBLCP1 (via ubiquitin-like domain); the interaction recruits UBLCP1 to the 19S regulatory particle where it dephosphorylates 19S subunit PSMC2/RPT1 which impairs PSMC2 ATPase activity and disrupts 26S proteasome assembly.

Component of the 26S proteasome, a multiprotein complex involved in the ATP-dependent degradation of ubiquitinated proteins. This complex plays a key role in the maintenance of protein homeostasis by removing misfolded or damaged proteins, which could impair cellular functions, and by removing proteins whose functions are no longer required. Therefore, the proteasome participates in numerous cellular processes, including cell cycle progression, apoptosis, or DNA damage repair. In terms of biological role, binds to the intracellular domain of tumor necrosis factor type 1 receptor. The binding domain of TRAP1 and TRAP2 resides outside the death domain of TNFR1. The sequence is that of 26S proteasome non-ATPase regulatory subunit 2 (Psmd2) from Mus musculus (Mouse).